The sequence spans 128 residues: uncharacterized protein (128 aa).

The cysteines at positions 10 and 13 are disulfide-linked.

It belongs to the ArsC family.

This is an uncharacterized protein from Ureaplasma parvum serovar 3 (strain ATCC 700970).